Reading from the N-terminus, the 274-residue chain is Probable WRKY transcription factor 49 (274 aa).

Positions 108–173 form a DNA-binding region, WRKY; the sequence is NSNGMCDDGY…YEGFHFHYTY (66 aa). The disordered stretch occupies residues 188-228; it reads KTKIHKHNAQDMNKKSQTQEESKEAQLGELTNQNHPVNKAQ. A coiled-coil region spans residues 193–222; that stretch reads KHNAQDMNKKSQTQEESKEAQLGELTNQNH. Positions 195 to 213 are enriched in basic and acidic residues; it reads NAQDMNKKSQTQEESKEAQ. A compositionally biased stretch (polar residues) spans 216 to 228; sequence ELTNQNHPVNKAQ.

This sequence belongs to the WRKY group II-c family.

It is found in the nucleus. Functionally, transcription factor. Interacts specifically with the W box (5'-(T)TGAC[CT]-3'), a frequently occurring elicitor-responsive cis-acting element. This Arabidopsis thaliana (Mouse-ear cress) protein is Probable WRKY transcription factor 49 (WRKY49).